The chain runs to 160 residues: Afimbrial adhesin AFA-III (160 aa).

Residues 1–21 form the signal peptide; the sequence is MKKLAIMAAASMVFAVSSAHA. Residues 22–75 form a receptor-binding region; the sequence is GFTPSGTTGTTKLTVTEECQVRVGDLTVAKTRGQLTDAAPIGPVTVQALGCNAR.

Belongs to the Dr-adhesin family.

It is found in the fimbrium. Hemagglutinins of uropathogenic E.coli mediate adherence to the upper urinary tract. These adhesins bind to the Dr blood group antigen and also agglutinate human erythrocytes in the presence of D-mannose (mannose-resistant hemagglutination (MRHA)). The protein is Afimbrial adhesin AFA-III (afaE3) of Escherichia coli.